Consider the following 542-residue polypeptide: Trans-alpha-bergamotene synthase (542 aa).

The Mg(2+) site is built by Asp295, Asp299, Asp439, Thr443, and Glu447. The DDXXD motif signature appears at 295 to 299 (DDFYD).

Belongs to the terpene synthase family. It depends on Mg(2+) as a cofactor.

The catalysed reaction is (2E,6E)-farnesyl diphosphate = (1S,5S,6R)-alpha-bergamotene + diphosphate. Its pathway is secondary metabolite biosynthesis; terpenoid biosynthesis. Functionally, sesquiterpene synthase converting farnesyl diphosphate to trans-alpha-bergamotene as the major product. In Phyla dulcis (Aztec sweet herb), this protein is Trans-alpha-bergamotene synthase.